Here is a 190-residue protein sequence, read N- to C-terminus: Putative manganese efflux pump MntP (190 aa).

Transmembrane regions (helical) follow at residues Pro-3–Gly-23, Leu-41–Ala-61, Asp-69–Leu-89, Phe-105–Gly-125, Ile-133–Met-153, and Ile-168–Ala-188.

Belongs to the MntP (TC 9.B.29) family.

The protein localises to the cell inner membrane. Probably functions as a manganese efflux pump. The polypeptide is Putative manganese efflux pump MntP (Pseudomonas syringae pv. tomato (strain ATCC BAA-871 / DC3000)).